The chain runs to 330 residues: Anthranilate phosphoribosyltransferase (330 aa).

5-phospho-alpha-D-ribose 1-diphosphate-binding positions include G75, 78-79, T83, 85-88, 103-111, and A115; these read GD, NVST, and KHGNRAASS. G75 is an anthranilate binding site. S87 serves as a coordination point for Mg(2+). N106 contributes to the anthranilate binding site. R161 serves as a coordination point for anthranilate. 2 residues coordinate Mg(2+): D220 and E221.

Belongs to the anthranilate phosphoribosyltransferase family. In terms of assembly, homodimer. It depends on Mg(2+) as a cofactor.

The enzyme catalyses N-(5-phospho-beta-D-ribosyl)anthranilate + diphosphate = 5-phospho-alpha-D-ribose 1-diphosphate + anthranilate. Its pathway is amino-acid biosynthesis; L-tryptophan biosynthesis; L-tryptophan from chorismate: step 2/5. Catalyzes the transfer of the phosphoribosyl group of 5-phosphorylribose-1-pyrophosphate (PRPP) to anthranilate to yield N-(5'-phosphoribosyl)-anthranilate (PRA). This chain is Anthranilate phosphoribosyltransferase, found in Novosphingobium aromaticivorans (strain ATCC 700278 / DSM 12444 / CCUG 56034 / CIP 105152 / NBRC 16084 / F199).